Consider the following 207-residue polypeptide: Ras-related protein Rab-7a (207 aa).

Threonine 2 is modified (N-acetylthreonine). Residues serine 17, glycine 18, valine 19, glycine 20, lysine 21, threonine 22, serine 23, serine 34, asparagine 35, tyrosine 37, and threonine 40 each contribute to the GTP site. Threonine 22 serves as a coordination point for Mg(2+). Positions 28–41 (YVNKKFSNQYKATI) match the Switch 1 motif. Mg(2+) contacts are provided by threonine 40 and aspartate 63. GTP is bound at residue glycine 66. The Switch 2 signature appears at 67–82 (QERFQSLGVAFYRGAD). At serine 72 the chain carries Phosphoserine. Asparagine 125, lysine 126, aspartate 128, alanine 156, and lysine 157 together coordinate GTP. Glycyl lysine isopeptide (Lys-Gly) (interchain with G-Cter in ubiquitin) cross-links involve residues lysine 191 and lysine 194. 2 S-geranylgeranyl cysteine lipidation sites follow: cysteine 205 and cysteine 207. Cysteine 207 carries the post-translational modification Cysteine methyl ester.

It belongs to the small GTPase superfamily. Rab family. Interacts with NTRK1/TRKA. Interacts with RILP. Interacts with PSMA7. Interacts with RNF115. Interacts with and FYCO1. Interacts with the PIK3C3/VPS34-PIK3R4 complex. The GTP-bound form interacts with OSBPL1A. The GTP-bound form interacts with RAC1. Interacts with CLN3. Interacts with CHM, the substrate-binding subunit of the Rab geranylgeranyltransferase complex. Interacts with C9orf72. Does not interact with HPS4 and the BLOC-3 complex (heterodimer of HPS1 and HPS4). Interacts with CLN5. Interacts with PLEKHM1 (via N- and C-terminus). Interacts with PRPH; the interaction is direct. Interacts with VPS13A. The GDP-bound form interacts with RIMOC1. Interacts with the MON1A-CCZ1B complex and this interaction is enhanced in the presence of RIMOC1. Interacts with VPS39 and VPS41. Forms a ternary complex with LAMP2 and RUFY4; the interaction with LAMP2 is mediated by RUFY4 (via RUN and coiled coil domains). Mg(2+) is required as a cofactor. Post-translationally, deubiquitination at Lys-191 and Lys-194 by USP32. In terms of processing, phosphorylated at Ser-72 by LRRK1; phosphorylation is dependent on protein kinase C (PKC) activation of LRRK1. Prenylated. Prenylation is required for association with cellular membranes. Expressed in osteoclasts and in neurons.

The protein resides in the cytoplasmic vesicle. It is found in the phagosome membrane. Its subcellular location is the late endosome membrane. It localises to the lysosome membrane. The protein localises to the melanosome membrane. The protein resides in the autophagosome membrane. It is found in the lipid droplet. Its subcellular location is the endosome membrane. It localises to the mitochondrion membrane. It catalyses the reaction GTP + H2O = GDP + phosphate + H(+). Regulated by guanine nucleotide exchange factors (GEFs) which promote the exchange of bound GDP for free GTP. Regulated by GTPase activating proteins (GAPs) which increase the GTP hydrolysis activity. Inhibited by GDP dissociation inhibitors (GDIs). In terms of biological role, the small GTPases Rab are key regulators of intracellular membrane trafficking, from the formation of transport vesicles to their fusion with membranes. Rabs cycle between an inactive GDP-bound form and an active GTP-bound form that is able to recruit to membranes different sets of downstream effectors directly responsible for vesicle formation, movement, tethering and fusion. In its active state, RAB7A binds to a variety of effector proteins playing a key role in the regulation of endo-lysosomal trafficking. Governs early-to-late endosomal maturation, microtubule minus-end as well as plus-end directed endosomal migration and positioning, and endosome-lysosome transport through different protein-protein interaction cascades. Also plays a central role in growth-factor-mediated cell signaling, nutrient-transporter-mediated nutrient uptake, neurotrophin transport in the axons of neurons and lipid metabolism. Also involved in regulation of some specialized endosomal membrane trafficking, such as maturation of melanosomes, pathogen-induced phagosomes (or vacuoles) and autophagosomes. Plays a role in the maturation and acidification of phagosomes that engulf pathogens, such as S.aureus and Mycobacteria. Plays a role in the fusion of phagosomes with lysosomes. In concert with RAC1, plays a role in regulating the formation of RBs (ruffled borders) in osteoclasts. Controls the endosomal trafficking and neurite outgrowth signaling of NTRK1/TRKA. Regulates the endocytic trafficking of the EGF-EGFR complex by regulating its lysosomal degradation. Involved in the ADRB2-stimulated lipolysis through lipophagy, a cytosolic lipase-independent autophagic pathway. Required for the exosomal release of SDCBP, CD63 and syndecan. Required for vesicular trafficking and cell surface expression of ACE2. May play a role in PRPH neuronal intermediate filament assembly. In Rattus norvegicus (Rat), this protein is Ras-related protein Rab-7a.